A 74-amino-acid polypeptide reads, in one-letter code: Kappa-scoloptoxin(07)-Ssm2c (74 aa).

The N-terminal stretch at 1–19 is a signal peptide; the sequence is MLVFYAPLFVSIFSNTVMG. A propeptide spanning residues 20–41 is cleaved from the precursor; it reads ATIDKPIPKPILREAIEKIAVN.

This sequence belongs to the scoloptoxin-07 family. In terms of processing, contains 3 disulfide bonds. As to expression, expressed by the venom gland.

It is found in the secreted. In terms of biological role, inhibits voltage-gated potassium channels. The chain is Kappa-scoloptoxin(07)-Ssm2c from Scolopendra mutilans (Chinese red-headed centipede).